The primary structure comprises 567 residues: Ran-binding protein 3 (567 aa).

Over residues 1–10 (MADLANEEKP) the composition is skewed to basic and acidic residues. Disordered regions lie at residues 1–263 (MADL…FVFG), 332–373 (LSPP…AESA), and 515–567 (VEQE…TGST). Residue Ala2 is modified to N-acetylalanine. N6-acetyllysine occurs at positions 9 and 21. The span at 39–49 (EEPRGEAEAPH) shows a compositional bias: basic and acidic residues. Thr75 is subject to Phosphothreonine. Residues 75–89 (TPPPPAPEAQLPPFP) are compositionally biased toward pro residues. A phosphoserine mark is found at Ser100, Ser101, and Ser108. Residues 117-125 (PPVKRERTS) carry the Nuclear localization signal motif. Thr124 carries the phosphothreonine modification. 2 stretches are compositionally biased toward polar residues: residues 125 to 134 (SSLTQFPPSQ) and 184 to 197 (ALSQ…TNGV). Ser126 carries the post-translational modification Phosphoserine. A phosphoserine mark is found at Ser219, Ser333, Ser353, Ser355, and Ser372. The span at 347-362 (ENAAAESGSESSSQEA) shows a compositional bias: low complexity. The RanBD1 domain maps to 378–518 (KATARKCLLE…LALRSRVEQE (141 aa)). A compositionally biased stretch (acidic residues) spans 534 to 544 (NEEDDSDDDDV). Ser539 bears the Phosphoserine mark. Over residues 549–567 (GATAAGAGDEGDGQTTGST) the composition is skewed to low complexity.

Interacts with CHC1 in a Ran-stimulated manner. Interacts with XPO1. Interacts (via its C-terminal R domain) with SMAD2 (dephosphorylated form via its MH1 and MH2 domains); the interaction results in the nuclear export of SMAD2 and termination of the TGF-beta signaling. Interacts (via its C-terminal R domain) with SMAD3 (dephosphorylated form via its MH1 domain); the interaction results in the nuclear export of SMAD3 and termination of the TGF-beta signaling. In terms of processing, phosphorylation at Ser-126 promotes its import into the nucleus. In terms of tissue distribution, widely expressed with high levels in testis and heart.

It is found in the cytoplasm. Its subcellular location is the nucleus. Functionally, acts as a cofactor for XPO1/CRM1-mediated nuclear export, perhaps as export complex scaffolding protein. Bound to XPO1/CRM1, stabilizes the XPO1/CRM1-cargo interaction. In the absence of Ran-bound GTP prevents binding of XPO1/CRM1 to the nuclear pore complex. Binds to CHC1/RCC1 and increases the guanine nucleotide exchange activity of CHC1/RCC1. Recruits XPO1/CRM1 to CHC1/RCC1 in a Ran-dependent manner. Negative regulator of TGF-beta signaling through interaction with the R-SMAD proteins, SMAD2 and SMAD3, and mediating their nuclear export. This chain is Ran-binding protein 3 (RANBP3), found in Homo sapiens (Human).